We begin with the raw amino-acid sequence, 329 residues long: Cytosolic arginine sensor for mTORC1 subunit 1 (329 aa).

At Ser-14 the chain carries Phosphoserine. 2 consecutive ACT domains span residues Ala-72–Ala-138 and Gly-260–Gln-321. Residues Ser-111–Val-112, Gly-274, Ile-280–Val-281, and Thr-300–Asp-304 each bind L-arginine.

Belongs to the GATS family. In terms of assembly, forms homodimers and heterodimers with CASTOR2. Interacts with the GATOR2 complex which is composed of MIOS, SEC13, SEH1L, WDR24 and WDR59; the interaction is negatively regulated by arginine. Interacts with TM4SF5; the interaction is positively regulated by leucine and is negatively regulated by arginine. Post-translationally, phosphorylation at Ser-14 by AKT1, promoting the interaction between CASTOR1 and RNF167. Ubiquitinated by RNF167 via 'Lys-29'-polyubiquitination, leading to its degradation, releasing the GATOR2 complex. Ubiquitination by RNF167 is promoted by phosphorylation at Ser-14 by AKT1.

The protein resides in the cytoplasm. It is found in the cytosol. Functions as an intracellular arginine sensor within the amino acid-sensing branch of the TORC1 signaling pathway. As a homodimer or a heterodimer with CASTOR2, binds and inhibits the GATOR subcomplex GATOR2 and thereby mTORC1. Binding of arginine to CASTOR1 allosterically disrupts the interaction of CASTOR1-containing dimers with GATOR2 which can in turn activate mTORC1 and the TORC1 signaling pathway. This is Cytosolic arginine sensor for mTORC1 subunit 1 from Bos taurus (Bovine).